We begin with the raw amino-acid sequence, 510 residues long: tRNA-2-methylthio-N(6)-dimethylallyladenosine synthase (510 aa).

Residues 19-135 enclose the MTTase N-terminal domain; the sequence is RTFEVRTYGC…LPALLDRARH (117 aa). Residues C28, C64, C98, C172, C176, and C179 each contribute to the [4Fe-4S] cluster site. The region spanning 158-394 is the Radical SAM core domain; sequence RESSYAAWVS…IELQERISLE (237 aa). The TRAM domain occupies 397-467; that stretch reads TAQIGRRVEL…PHHLIADAGL (71 aa). A disordered region spans residues 477-510; it reads DAHAAGQKPRTGVGLGMPAVGAPDPLPATTGCAR.

The protein belongs to the methylthiotransferase family. MiaB subfamily. Monomer. [4Fe-4S] cluster serves as cofactor.

It localises to the cytoplasm. It catalyses the reaction N(6)-dimethylallyladenosine(37) in tRNA + (sulfur carrier)-SH + AH2 + 2 S-adenosyl-L-methionine = 2-methylsulfanyl-N(6)-dimethylallyladenosine(37) in tRNA + (sulfur carrier)-H + 5'-deoxyadenosine + L-methionine + A + S-adenosyl-L-homocysteine + 2 H(+). Catalyzes the methylthiolation of N6-(dimethylallyl)adenosine (i(6)A), leading to the formation of 2-methylthio-N6-(dimethylallyl)adenosine (ms(2)i(6)A) at position 37 in tRNAs that read codons beginning with uridine. The protein is tRNA-2-methylthio-N(6)-dimethylallyladenosine synthase of Mycolicibacterium vanbaalenii (strain DSM 7251 / JCM 13017 / BCRC 16820 / KCTC 9966 / NRRL B-24157 / PYR-1) (Mycobacterium vanbaalenii).